We begin with the raw amino-acid sequence, 669 residues long: DNA ligase (669 aa).

Residues 34–38 (DAEYD), 83–84 (SL), and glutamate 117 contribute to the NAD(+) site. Lysine 119 functions as the N6-AMP-lysine intermediate in the catalytic mechanism. NAD(+) contacts are provided by arginine 140, glutamate 177, lysine 293, and lysine 317. Zn(2+)-binding residues include cysteine 411, cysteine 414, cysteine 429, and cysteine 434. A BRCT domain is found at 591 to 669 (RLGGRFTGKT…EDEFLKMLEG (79 aa)).

Belongs to the NAD-dependent DNA ligase family. LigA subfamily. It depends on Mg(2+) as a cofactor. Mn(2+) is required as a cofactor.

It carries out the reaction NAD(+) + (deoxyribonucleotide)n-3'-hydroxyl + 5'-phospho-(deoxyribonucleotide)m = (deoxyribonucleotide)n+m + AMP + beta-nicotinamide D-nucleotide.. DNA ligase that catalyzes the formation of phosphodiester linkages between 5'-phosphoryl and 3'-hydroxyl groups in double-stranded DNA using NAD as a coenzyme and as the energy source for the reaction. It is essential for DNA replication and repair of damaged DNA. This Geotalea daltonii (strain DSM 22248 / JCM 15807 / FRC-32) (Geobacter daltonii) protein is DNA ligase.